Here is a 154-residue protein sequence, read N- to C-terminus: 17 kDa surface antigen (154 aa).

Residues 1 to 19 form the signal peptide; it reads MKLLSKIMIIALAASMLQA. Cysteine 20 is lipidated: N-palmitoyl cysteine. A lipid anchor (S-diacylglycerol cysteine) is attached at cysteine 20.

It belongs to the rickettsiale 17 kDa surface antigen family.

The protein resides in the cell outer membrane. This Rickettsia montanensis protein is 17 kDa surface antigen (omp).